Consider the following 366-residue polypeptide: Ribosomal RNA large subunit methyltransferase M (366 aa).

Residues Ser188, 221 to 224, Asp240, Asp260, and Asp277 contribute to the S-adenosyl-L-methionine site; that span reads CPGG. Catalysis depends on Lys306, which acts as the Proton acceptor.

This sequence belongs to the class I-like SAM-binding methyltransferase superfamily. RNA methyltransferase RlmE family. RlmM subfamily. As to quaternary structure, monomer.

The protein resides in the cytoplasm. It catalyses the reaction cytidine(2498) in 23S rRNA + S-adenosyl-L-methionine = 2'-O-methylcytidine(2498) in 23S rRNA + S-adenosyl-L-homocysteine + H(+). Functionally, catalyzes the 2'-O-methylation at nucleotide C2498 in 23S rRNA. In Shigella boydii serotype 4 (strain Sb227), this protein is Ribosomal RNA large subunit methyltransferase M.